The following is a 667-amino-acid chain: Probable potassium transport system protein Kup (667 aa).

Transmembrane regions (helical) follow at residues 16 to 36 (GFII…LYTM), 58 to 78 (VSLI…LIAL), 101 to 121 (WLII…ALTP), 146 to 166 (TNVI…QRFG), 167 to 187 (TGVI…VLGI), 221 to 241 (IFIL…YSDL), 253 to 273 (WPFV…WILA), 294 to 314 (VYLV…LISG), 343 to 363 (LYIP…VLYF), 373 to 393 (YGLA…YYLI), 399 to 419 (PLLA…FFLA), and 431 to 451 (VVVL…GTVI).

This sequence belongs to the HAK/KUP transporter (TC 2.A.72) family.

Its subcellular location is the cell membrane. The catalysed reaction is K(+)(in) + H(+)(in) = K(+)(out) + H(+)(out). Functionally, transport of potassium into the cell. Likely operates as a K(+):H(+) symporter. This is Probable potassium transport system protein Kup from Streptococcus equi subsp. zooepidemicus (strain MGCS10565).